A 29-amino-acid polypeptide reads, in one-letter code: Kalata-B15 (29 aa).

Positions 1–29 form a cross-link, cyclopeptide (Gly-Asp); sequence GLPVCGESCFGGSCYTPGCSCTWPICTRD. 3 cysteine pairs are disulfide-bonded: Cys5/Cys19, Cys9/Cys21, and Cys14/Cys26.

Post-translationally, this is a cyclic peptide.

In terms of biological role, probably participates in a plant defense mechanism. The polypeptide is Kalata-B15 (Oldenlandia affinis).